The sequence spans 193 residues: Probable GTP-binding protein EngB (193 aa).

One can recognise an EngB-type G domain in the interval 22–193 (SFPEIVFAGR…LAHFDQYICQ (172 aa)). GTP-binding positions include 30 to 37 (GRSNVGKS), 57 to 61 (GKTRL), 75 to 78 (DLPG), 142 to 145 (TKYD), and 172 to 174 (YSS). Residues S37 and T59 each contribute to the Mg(2+) site.

The protein belongs to the TRAFAC class TrmE-Era-EngA-EngB-Septin-like GTPase superfamily. EngB GTPase family. The cofactor is Mg(2+).

Its function is as follows. Necessary for normal cell division and for the maintenance of normal septation. This Pelodictyon phaeoclathratiforme (strain DSM 5477 / BU-1) protein is Probable GTP-binding protein EngB.